The following is a 455-amino-acid chain: Retinoic acid receptor beta (455 aa).

The segment at 1–87 (MTTSSRTCPV…PLPPPRVYKP (87 aa)) is modulating. Residues 44–78 (LQSHPPTSGCSTPSPATVETQSTSSEELVPSPPSP) form a disordered region. Residues 47–66 (HPPTSGCSTPSPATVETQST) are compositionally biased toward polar residues. NR C4-type zinc fingers lie at residues 88 to 108 (CFVC…CEGC) and 124 to 148 (CHRD…LQKC). The nuclear receptor DNA-binding region spans 88-153 (CFVCQDKSSG…RLQKCFEVGM (66 aa)). The hinge stretch occupies residues 154-182 (SKESVRNDRNKKKKEPTKQESTENYEMTA). The NR LBD domain maps to 183–417 (ELDDLTEKIR…PLIQEMLENS (235 aa)). The tract at residues 416-455 (NSEGHEPLTPTSNGNTAEHSPSISPSSVDNSSVSQSPMVQ) is disordered. Residues 424–434 (TPTSNGNTAEH) are compositionally biased toward polar residues. Low complexity predominate over residues 435 to 455 (SPSISPSSVDNSSVSQSPMVQ).

The protein belongs to the nuclear hormone receptor family. NR1 subfamily. Heterodimer; with a RXR molecule. Binds DNA preferentially as a RAR/RXR heterodimer.

The protein localises to the nucleus. Receptor for retinoic acid. Retinoic acid receptors bind as heterodimers to their target response elements in response to their ligands, all-trans or 9-cis retinoic acid, and regulate gene expression in various biological processes. The RAR/RXR heterodimers bind to the retinoic acid response elements (RARE) composed of tandem 5'-AGGTCA-3' sites known as DR1-DR5. Required for limb and craniofacial development. In Gallus gallus (Chicken), this protein is Retinoic acid receptor beta (RARB).